A 461-amino-acid polypeptide reads, in one-letter code: D-phenylhydantoinase (461 aa).

A divalent metal cation is bound by residues His59, His61, and Lys151. Lys151 is subject to N6-carboxylysine. Position 156 (Tyr156) interacts with substrate. A divalent metal cation contacts are provided by His182 and His239. Residue Ser286 participates in substrate binding. Position 313 (Asp313) interacts with a divalent metal cation. Residue Asn335 coordinates substrate.

Belongs to the metallo-dependent hydrolases superfamily. Hydantoinase/dihydropyrimidinase family. Homotetramer. The cofactor is a divalent metal cation. In terms of processing, carboxylation allows a single lysine to coordinate two divalent metal cations.

It catalyses the reaction D-5-phenylhydantoin + H2O = N-carbamoyl-D-phenylglycine + H(+). Functionally, catalyzes the stereospecific hydrolysis of the cyclic amide bond of D-hydantoin derivatives with an aromatic side chains at the 5'-position. Has no activity on dihydropyrimidines. The physiological function is unknown. This Escherichia coli O7:K1 (strain IAI39 / ExPEC) protein is D-phenylhydantoinase.